Consider the following 97-residue polypeptide: Co-chaperonin GroES (97 aa).

Belongs to the GroES chaperonin family. In terms of assembly, heptamer of 7 subunits arranged in a ring. Interacts with the chaperonin GroEL.

The protein resides in the cytoplasm. Its function is as follows. Together with the chaperonin GroEL, plays an essential role in assisting protein folding. The GroEL-GroES system forms a nano-cage that allows encapsulation of the non-native substrate proteins and provides a physical environment optimized to promote and accelerate protein folding. GroES binds to the apical surface of the GroEL ring, thereby capping the opening of the GroEL channel. The chain is Co-chaperonin GroES from Pseudomonas putida (strain GB-1).